The following is a 379-amino-acid chain: Succinyl-diaminopimelate desuccinylase (379 aa).

H68 is a binding site for Zn(2+). D70 is a catalytic residue. Zn(2+) is bound at residue D101. E134 functions as the Proton acceptor in the catalytic mechanism. Zn(2+) contacts are provided by E135, E163, and H352.

The protein belongs to the peptidase M20A family. DapE subfamily. As to quaternary structure, homodimer. It depends on Zn(2+) as a cofactor. The cofactor is Co(2+).

The enzyme catalyses N-succinyl-(2S,6S)-2,6-diaminopimelate + H2O = (2S,6S)-2,6-diaminopimelate + succinate. The protein operates within amino-acid biosynthesis; L-lysine biosynthesis via DAP pathway; LL-2,6-diaminopimelate from (S)-tetrahydrodipicolinate (succinylase route): step 3/3. In terms of biological role, catalyzes the hydrolysis of N-succinyl-L,L-diaminopimelic acid (SDAP), forming succinate and LL-2,6-diaminopimelate (DAP), an intermediate involved in the bacterial biosynthesis of lysine and meso-diaminopimelic acid, an essential component of bacterial cell walls. This is Succinyl-diaminopimelate desuccinylase from Dinoroseobacter shibae (strain DSM 16493 / NCIMB 14021 / DFL 12).